A 183-amino-acid polypeptide reads, in one-letter code: Ribosome rescue factor SmrB (183 aa).

Residues 98–173 form the Smr domain; the sequence is LDLHGLTQLQ…GDAALLVLIE (76 aa).

Belongs to the SmrB family. As to quaternary structure, associates with collided ribosomes, but not with correctly translating polysomes.

Its function is as follows. Acts as a ribosome collision sensor. Detects stalled/collided disomes (pairs of ribosomes where the leading ribosome is stalled and a second ribosome has collided with it) and endonucleolytically cleaves mRNA at the 5' boundary of the stalled ribosome. Stalled/collided disomes form a new interface (primarily via the 30S subunits) that binds SmrB. Cleaved mRNA becomes available for tmRNA ligation, leading to ribosomal subunit dissociation and rescue of stalled ribosomes. In Shigella boydii serotype 18 (strain CDC 3083-94 / BS512), this protein is Ribosome rescue factor SmrB.